Here is a 289-residue protein sequence, read N- to C-terminus: Minor capsid protein P10 (289 aa).

The tract at residues 1 to 21 (MMNFILVLLIVAMIGTILVSE) is hydrophobic.

In terms of assembly, interacts with the major capsid protein.

The protein localises to the virion. Functionally, one of the minor capsid proteins that constitute a network internal to the major capsid proteins and outside the lipid membrane. The minor capsid proteins glue and stabilize the capsomers. In Chlorella (PBCV-1), this protein is Minor capsid protein P10.